Here is a 206-residue protein sequence, read N- to C-terminus: Small ribosomal subunit protein uS3 (206 aa).

The KH type-2 domain occupies Ile-39–Lys-107.

Belongs to the universal ribosomal protein uS3 family. In terms of assembly, part of the 30S ribosomal subunit. Forms a tight complex with proteins S10 and S14.

Its function is as follows. Binds the lower part of the 30S subunit head. Binds mRNA in the 70S ribosome, positioning it for translation. In Wolbachia pipientis subsp. Culex pipiens (strain wPip), this protein is Small ribosomal subunit protein uS3.